The sequence spans 499 residues: Probable 2-isopropylmalate synthase (499 aa).

Positions 5–256 (VRIFDTTLRD…ELDVRTEMLV (252 aa)) constitute a Pyruvate carboxyltransferase domain. 4 residues coordinate a divalent metal cation: aspartate 14, histidine 194, histidine 196, and asparagine 230.

The protein belongs to the alpha-IPM synthase/homocitrate synthase family. Homodimer. It depends on a divalent metal cation as a cofactor.

It catalyses the reaction 3-methyl-2-oxobutanoate + acetyl-CoA + H2O = (2S)-2-isopropylmalate + CoA + H(+). Its pathway is amino-acid biosynthesis; L-leucine biosynthesis; L-leucine from 3-methyl-2-oxobutanoate: step 1/4. Functionally, catalyzes the condensation of the acetyl group of acetyl-CoA with 3-methyl-2-oxobutanoate (2-oxoisovalerate) to form 3-carboxy-3-hydroxy-4-methylpentanoate (2-isopropylmalate). The protein is Probable 2-isopropylmalate synthase (leuA) of Methanopyrus kandleri (strain AV19 / DSM 6324 / JCM 9639 / NBRC 100938).